The sequence spans 298 residues: Glycine--tRNA ligase alpha subunit (298 aa).

It belongs to the class-II aminoacyl-tRNA synthetase family. In terms of assembly, tetramer of two alpha and two beta subunits.

The protein resides in the cytoplasm. It carries out the reaction tRNA(Gly) + glycine + ATP = glycyl-tRNA(Gly) + AMP + diphosphate. In Helicobacter pylori (strain G27), this protein is Glycine--tRNA ligase alpha subunit.